Reading from the N-terminus, the 196-residue chain is Alpha-crystallin A chain (196 aa).

Position 1 is an N-acetylmethionine (Met-1). The required for complex formation with BFSP1 and BFSP2 stretch occupies residues 1-63 (MDVTIQHPWF…RTVLDSGISE (63 aa)). Deamidated glutamine; partial is present on Gln-6. Ser-45 carries the phosphoserine modification. Position 50 is a deamidated glutamine; partial (Gln-50). Positions 76-185 (HAGNPKNNPG…GHSERAIPVS (110 aa)) constitute a sHSP domain. N6-acetyllysine occurs at positions 93 and 122. Position 123 (His-123) interacts with Zn(2+). The residue at position 124 (Asn-124) is a Deamidated asparagine; partial. Residues Glu-125 and His-130 each contribute to the Zn(2+) site. Position 145 is a phosphoserine (Ser-145). Asn-146 is subject to Deamidated asparagine; partial. Residues 168-196 (KVQSGLDAGHSERAIPVSREEKPSSAPSS) are disordered. Gln-170 carries the deamidated glutamine; partial modification. Over residues 176-190 (GHSERAIPVSREEKP) the composition is skewed to basic and acidic residues. A Zn(2+)-binding site is contributed by His-177. O-linked (GlcNAc) serine glycosylation is present at Ser-185.

This sequence belongs to the small heat shock protein (HSP20) family. In terms of assembly, heteropolymer composed of three CRYAA and one CRYAB subunits. Inter-subunit bridging via zinc ions enhances stability, which is crucial as there is no protein turn over in the lens. Can also form homodimers and homotetramers (dimers of dimers) which serve as the building blocks of homooligomers. Within homooligomers, the zinc-binding motif is created from residues of 3 different molecules. His-123 and Glu-125 from one molecule are ligands of the zinc ion, and His-130 and His-177 residues from additional molecules complete the site with tetrahedral coordination geometry. Part of a complex required for lens intermediate filament formation composed of BFSP1, BFSP2 and CRYAA. Post-translationally, acetylation at Lys-93 may increase chaperone activity. Undergoes age-dependent proteolytical cleavage at the C-terminus. Cleavage by m-calpain produces specifically alpha-crystallin A(1-162), cleavage by Capn3/Lp82 produces specifically alpha-crystallin A(1-168) which is the major truncated form during normal maturation and induced cataract formation. As to expression, highly expressed in eye lens. Also expressed in non-lenticular tissues such as brain, spleen, liver, lung, skin, small intestine and a several epithelial and fibroblast cell lines with highest levels in spleen.

It is found in the cytoplasm. It localises to the nucleus. Functionally, contributes to the transparency and refractive index of the lens. Acts as a chaperone, preventing aggregation of various proteins under a wide range of stress conditions. Required for the correct formation of lens intermediate filaments as part of a complex composed of BFSP1, BFSP2 and CRYAA. Its function is as follows. Inhibits bacterial growth in the lens. This is Alpha-crystallin A chain (Cryaa) from Rattus norvegicus (Rat).